A 66-amino-acid chain; its full sequence is Large ribosomal subunit protein bL31 (66 aa).

Residues cysteine 16, cysteine 18, cysteine 36, and cysteine 39 each contribute to the Zn(2+) site.

It belongs to the bacterial ribosomal protein bL31 family. Type A subfamily. In terms of assembly, part of the 50S ribosomal subunit. Zn(2+) is required as a cofactor.

Binds the 23S rRNA. This Sulfurimonas denitrificans (strain ATCC 33889 / DSM 1251) (Thiomicrospira denitrificans (strain ATCC 33889 / DSM 1251)) protein is Large ribosomal subunit protein bL31.